The chain runs to 218 residues: Glycerol-3-phosphate acyltransferase 2 (218 aa).

The next 5 membrane-spanning stretches (helical) occupy residues 6-26 (YLLI…VLVG), 50-70 (VMGP…GTLA), 85-105 (LLLI…FLKF), 115-135 (AGVF…VFLP), and 159-179 (FWFH…LLFV).

It belongs to the PlsY family. In terms of assembly, probably interacts with PlsX.

It is found in the cell membrane. The catalysed reaction is an acyl phosphate + sn-glycerol 3-phosphate = a 1-acyl-sn-glycero-3-phosphate + phosphate. Its pathway is lipid metabolism; phospholipid metabolism. Catalyzes the transfer of an acyl group from acyl-phosphate (acyl-PO(4)) to glycerol-3-phosphate (G3P) to form lysophosphatidic acid (LPA). This enzyme utilizes acyl-phosphate as fatty acyl donor, but not acyl-CoA or acyl-ACP. The polypeptide is Glycerol-3-phosphate acyltransferase 2 (Lactobacillus johnsonii (strain CNCM I-12250 / La1 / NCC 533)).